We begin with the raw amino-acid sequence, 129 residues long: Small ribosomal subunit protein uS12 (129 aa).

The residue at position 89 (D89) is a 3-methylthioaspartic acid. Residues 110–129 are disordered; the sequence is RKQGRSRYGAPRKQVVATKK.

This sequence belongs to the universal ribosomal protein uS12 family. Part of the 30S ribosomal subunit. Contacts proteins S8 and S17. May interact with IF1 in the 30S initiation complex.

With S4 and S5 plays an important role in translational accuracy. Its function is as follows. Interacts with and stabilizes bases of the 16S rRNA that are involved in tRNA selection in the A site and with the mRNA backbone. Located at the interface of the 30S and 50S subunits, it traverses the body of the 30S subunit contacting proteins on the other side and probably holding the rRNA structure together. The combined cluster of proteins S8, S12 and S17 appears to hold together the shoulder and platform of the 30S subunit. The polypeptide is Small ribosomal subunit protein uS12 (Rickettsia bellii (strain RML369-C)).